The sequence spans 352 residues: Zinc finger protein 185 (352 aa).

2 disordered regions span residues 1–73 (MTTE…ELQS) and 86–121 (DVLPEKNQEPPALARPDSGLSSSTTEKIAHRQITPP). At S18 the chain carries Phosphoserine. Residues 61 to 72 (KKTTSSPTQELQ) are compositionally biased toward polar residues. T137 carries the phosphothreonine modification. A compositionally biased stretch (polar residues) spans 251-268 (VSSGKPVSSHCDSPSSIE). The tract at residues 251-287 (VSSGKPVSSHCDSPSSIEDSLDLAKKPPHEGTPSERP) is disordered. Residues 272–287 (DLAKKPPHEGTPSERP) show a composition bias toward basic and acidic residues. Residues 292-347 (CTYCSHEIQDCPKITLEHLGICCHEYCFKCGICNKPMGDLLDQIFIHRDTIHCGKC) form the LIM zinc-binding domain.

As to expression, expressed in skin, kidney, ovary, testis. Also expressed in brain, cartilage, heart, lung, spleen and thymus.

It is found in the cytoplasm. Its subcellular location is the cytoskeleton. It localises to the cell junction. The protein localises to the focal adhesion. May be involved in the regulation of cellular proliferation and/or differentiation. This chain is Zinc finger protein 185 (Znf185), found in Mus musculus (Mouse).